Reading from the N-terminus, the 145-residue chain is Granulysin (145 aa).

Positions 1–22 (MATWALLLLAAMLLGNPGLVFS) are cleaved as a signal peptide. Positions 62 to 142 (LGRDYRTCLT…EDLRLCIPST (81 aa)) constitute a Saposin B-type domain. Intrachain disulfides connect Cys-69-Cys-132 and Cys-96-Cys-107.

In terms of processing, a 9 kDa form is produced by proteolytic processing of a 15 kDa protein. In terms of tissue distribution, expressed in natural killer and T-cells.

The protein resides in the secreted. Functionally, antimicrobial protein that kills intracellular pathogens. Active against a broad range of microbes, including Gram-positive and Gram-negative bacteria, fungi, and parasites. Kills Mycobacterium tuberculosis. The sequence is that of Granulysin (GNLY) from Homo sapiens (Human).